The chain runs to 343 residues: Holliday junction branch migration complex subunit RuvB (343 aa).

The interval 1 to 181 (MDRIIDTAAT…FGIVQRLEFY (181 aa)) is large ATPase domain (RuvB-L). ATP is bound by residues Ile20, Arg21, Gly62, Lys65, Thr66, Thr67, 128 to 130 (EDF), Arg171, Tyr181, and Arg218. Thr66 lines the Mg(2+) pocket. The segment at 182-252 (SPEDLARIVR…VAQAAMQMLK (71 aa)) is small ATPAse domain (RuvB-S). Residues 255–343 (QGGFDELDRR…SAFTDPEDLF (89 aa)) form a head domain (RuvB-H) region. Residues Arg291, Arg310, and Arg315 each contribute to the DNA site.

This sequence belongs to the RuvB family. In terms of assembly, homohexamer. Forms an RuvA(8)-RuvB(12)-Holliday junction (HJ) complex. HJ DNA is sandwiched between 2 RuvA tetramers; dsDNA enters through RuvA and exits via RuvB. An RuvB hexamer assembles on each DNA strand where it exits the tetramer. Each RuvB hexamer is contacted by two RuvA subunits (via domain III) on 2 adjacent RuvB subunits; this complex drives branch migration. In the full resolvosome a probable DNA-RuvA(4)-RuvB(12)-RuvC(2) complex forms which resolves the HJ.

The protein resides in the cytoplasm. The catalysed reaction is ATP + H2O = ADP + phosphate + H(+). Functionally, the RuvA-RuvB-RuvC complex processes Holliday junction (HJ) DNA during genetic recombination and DNA repair, while the RuvA-RuvB complex plays an important role in the rescue of blocked DNA replication forks via replication fork reversal (RFR). RuvA specifically binds to HJ cruciform DNA, conferring on it an open structure. The RuvB hexamer acts as an ATP-dependent pump, pulling dsDNA into and through the RuvAB complex. RuvB forms 2 homohexamers on either side of HJ DNA bound by 1 or 2 RuvA tetramers; 4 subunits per hexamer contact DNA at a time. Coordinated motions by a converter formed by DNA-disengaged RuvB subunits stimulates ATP hydrolysis and nucleotide exchange. Immobilization of the converter enables RuvB to convert the ATP-contained energy into a lever motion, pulling 2 nucleotides of DNA out of the RuvA tetramer per ATP hydrolyzed, thus driving DNA branch migration. The RuvB motors rotate together with the DNA substrate, which together with the progressing nucleotide cycle form the mechanistic basis for DNA recombination by continuous HJ branch migration. Branch migration allows RuvC to scan DNA until it finds its consensus sequence, where it cleaves and resolves cruciform DNA. The chain is Holliday junction branch migration complex subunit RuvB from Xylella fastidiosa (strain 9a5c).